Consider the following 263-residue polypeptide: Alpha-tubulin N-acetyltransferase 2 (263 aa).

The 181-residue stretch at 1–181 folds into the N-acetyltransferase domain; it reads MEIAFDLSTI…NKYALCSNFF (181 aa). 115 to 128 lines the acetyl-CoA pocket; the sequence is FFVVPTEQRSGNGF. 2 disordered regions span residues 191–223 and 242–263; these read TPRQ…NRPR and EVDP…RRIW. The span at 200 to 212 shows a compositional bias: low complexity; sequence RASSAVSSHASSR. The span at 253–263 shows a compositional bias: basic and acidic residues; that stretch reads NARDFGHRRIW.

The protein belongs to the acetyltransferase ATAT1 family. Expressed in touch receptor neurons and in a subset of ciliated neurons, including PDE, ADE, CEP, and OLQ neurons.

It carries out the reaction L-lysyl-[alpha-tubulin] + acetyl-CoA = N(6)-acetyl-L-lysyl-[alpha-tubulin] + CoA + H(+). Its function is as follows. Specifically acetylates 'Lys-40' in alpha-tubulin/mec-12 on the lumenal side of microtubules. Promotes microtubule destabilization and accelerates microtubule dynamics; this activity may be independent of acetylation activity. Acetylates alpha-tubulin with a slow enzymatic rate, due to a catalytic site that is not optimized for acetyl transfer. Enters the microtubule through each end and diffuses quickly throughout the lumen of microtubules. Acetylates only long/old microtubules because of its slow acetylation rate since it does not have time to act on dynamically unstable microtubules before the enzyme is released. Required for the maintenance of touch receptor neurons and possibly other type of neurons involved in locomotion. The chain is Alpha-tubulin N-acetyltransferase 2 (atat-2) from Caenorhabditis elegans.